We begin with the raw amino-acid sequence, 181 residues long: MSSFHATTIFAVQHNGKSAMAGDGQVTFGQAVVMKHTARKVRKLFNGKVIAGFAGSVADAFTLFEMFEAKLEEYNGNLQRAAVELAKEWRSDKVLRKLEAMLIVMNADSMLLVSGTGEVIEPDDGILAIGSGGNYALAAGRALKRHAGSQLDAKAIARASLETAGEICVYTNDQIIVEELE.

Ser-2 is an active-site residue. Residues Gly-165, Cys-168, and Thr-171 each coordinate Na(+).

It belongs to the peptidase T1B family. HslV subfamily. A double ring-shaped homohexamer of ClpQ is capped on each side by a ring-shaped ClpY homohexamer. The assembly of the ClpQ/ClpY complex is dependent on binding of ATP.

Its subcellular location is the cytoplasm. Functionally, protease subunit of a proteasome-like degradation complex. In Bacillus licheniformis (strain ATCC 14580 / DSM 13 / JCM 2505 / CCUG 7422 / NBRC 12200 / NCIMB 9375 / NCTC 10341 / NRRL NRS-1264 / Gibson 46), this protein is ATP-dependent protease subunit ClpQ (clpQ).